The chain runs to 365 residues: Isopentenyl-diphosphate delta-isomerase (365 aa).

8 to 9 contributes to the substrate binding site; that stretch reads RK. Residues 67 to 69, Ser-97, and Asn-126 each bind FMN; that span reads SIT. Residue 97-99 coordinates substrate; the sequence is SQR. Gln-160 is a substrate binding site. Glu-161 provides a ligand contact to Mg(2+). Residues Lys-192, Thr-222, 272 to 274, and 293 to 294 each bind FMN; these read GIR and AL.

It belongs to the IPP isomerase type 2 family. As to quaternary structure, homooctamer. Dimer of tetramers. It depends on FMN as a cofactor. The cofactor is NADPH. Mg(2+) is required as a cofactor.

It is found in the cytoplasm. It catalyses the reaction isopentenyl diphosphate = dimethylallyl diphosphate. Involved in the biosynthesis of isoprenoids. Catalyzes the 1,3-allylic rearrangement of the homoallylic substrate isopentenyl (IPP) to its allylic isomer, dimethylallyl diphosphate (DMAPP). This is Isopentenyl-diphosphate delta-isomerase from Methanosarcina barkeri (strain Fusaro / DSM 804).